An 82-amino-acid polypeptide reads, in one-letter code: Neuromacin (82 aa).

A signal peptide spans 1–23 (MALLNKLLCFALVFMIFGEFVTP). 4 disulfide bridges follow: C25–C32, C47–C51, C61–C69, and C79–C81.

Belongs to the macin family.

It is found in the secreted. This is Neuromacin from Hirudo medicinalis (Medicinal leech).